A 278-amino-acid polypeptide reads, in one-letter code: Large ribosomal subunit protein uL2 (278 aa).

The segment at 223–278 is disordered; it reads GVAMNPIDHPHGGGEGRTSGGRHPVTPWGFPTKGKKTRSNKRTDTFIVSSRHNRKK.

It belongs to the universal ribosomal protein uL2 family. As to quaternary structure, part of the 50S ribosomal subunit. Forms a bridge to the 30S subunit in the 70S ribosome.

One of the primary rRNA binding proteins. Required for association of the 30S and 50S subunits to form the 70S ribosome, for tRNA binding and peptide bond formation. It has been suggested to have peptidyltransferase activity; this is somewhat controversial. Makes several contacts with the 16S rRNA in the 70S ribosome. This is Large ribosomal subunit protein uL2 from Methylobacterium sp. (strain 4-46).